The sequence spans 283 residues: Elongation factor Ts (283 aa).

Residues 80 to 83 are involved in Mg(2+) ion dislocation from EF-Tu; the sequence is TDFV.

This sequence belongs to the EF-Ts family.

The protein resides in the cytoplasm. Associates with the EF-Tu.GDP complex and induces the exchange of GDP to GTP. It remains bound to the aminoacyl-tRNA.EF-Tu.GTP complex up to the GTP hydrolysis stage on the ribosome. The sequence is that of Elongation factor Ts from Actinobacillus succinogenes (strain ATCC 55618 / DSM 22257 / CCUG 43843 / 130Z).